The chain runs to 312 residues: Ribosomal RNA small subunit methyltransferase H (312 aa).

Residues 35–37 (GGH), Asp55, Phe79, Asp100, and Gln107 contribute to the S-adenosyl-L-methionine site. Residues 279-312 (LVGKSQRPGPGEVAANPRSRSAVMRVAERTGGAA) are disordered.

This sequence belongs to the methyltransferase superfamily. RsmH family.

Its subcellular location is the cytoplasm. The enzyme catalyses cytidine(1402) in 16S rRNA + S-adenosyl-L-methionine = N(4)-methylcytidine(1402) in 16S rRNA + S-adenosyl-L-homocysteine + H(+). Specifically methylates the N4 position of cytidine in position 1402 (C1402) of 16S rRNA. In Aromatoleum aromaticum (strain DSM 19018 / LMG 30748 / EbN1) (Azoarcus sp. (strain EbN1)), this protein is Ribosomal RNA small subunit methyltransferase H.